The chain runs to 701 residues: MTEITAEGNASTTTTVIDSKNGSVPKSPGKVLKRTVTEDIVTTFSSPAAWLLVIALIITWSAVAVVMFDLVDYKNFSASSLSKIGSDPLKLVHDAVEETTDWVYGFFSLLSDIISSDGDEDDDDGDEDTDKGEIEEPPLKQKEIHKEKAEKEEKPERKILAKVAHREKEKVKEKEKSEKKATHKEKIEKKEKPETKTMAKEERKAKTEEKIKKEVKGGKQEKVKPTAAKVKEVQKTPPKAKEKEGKETAAVAKHEQKDQYAFCRYMIDMFVHGDLRPGQSPALPPPLPTVQASRPTPASPTLEGKEEEEKKKAEKKVTSETKKKEKEDVKKKSDKDTAIDVEKKEPGKAPETKQGTIKVVAQAAAKKDEKKEDSKKTKTPVEEHPKGKKQEKKEKYVEPAKSSKKEHSAPSEKQVKAKTERAKEETSAASTKKAVPGKKEEKTTKTVEQEIRKEKSGKTSTASKDKEPEIKKDEKMPKADKEVKPKPPQSQVKKEEKSESQVKKEAKPEQDIAKPEKTVSHGKPEEKVVKQVKATEKAAIEKTVKPKPAKKAEHQEKESPTIKTDKPKPTSKETPEVTESGKKKIEKSEKESKEKAEMKHLKEEKVSTRKESLQSHNVTKAEKPARVSREDLEDVSASKKAKEEAEDVSSTKRQKSPISFFQCVYLDGYNGYGFQFPVTPAYRPGESSGQPSSPGQKQQGQ.

The segment at 1-28 (MTEITAEGNASTTTTVIDSKNGSVPKSP) is disordered. At 1–47 (MTEITAEGNASTTTTVIDSKNGSVPKSPGKVLKRTVTEDIVTTFSSP) the chain is on the cytoplasmic side. A compositionally biased stretch (polar residues) spans 8–24 (GNASTTTTVIDSKNGSV). Residues 48-68 (AAWLLVIALIITWSAVAVVMF) form a helical membrane-spanning segment. The Lumenal segment spans residues 69–701 (DLVDYKNFSA…SSPGQKQQGQ (633 aa)). Asn-75 carries N-linked (GlcNAc...) asparagine glycosylation. Acidic residues predominate over residues 117 to 130 (DGDEDDDDGDEDTD). Disordered regions lie at residues 117–256 (DGDE…KHEQ), 273–654 (GDLR…TKRQ), and 676–701 (FPVTPAYRPGESSGQPSSPGQKQQGQ). 6 stretches are compositionally biased toward basic and acidic residues: residues 131 to 256 (KGEI…KHEQ), 303 to 351 (EGKE…KAPE), 365 to 385 (AKKDEKKEDSKKTKTPVEEHP), 391 to 426 (EKKEKYVEPAKSSKKEHSAPSEKQVKAKTERAKEET), 437 to 485 (GKKE…EVKP), and 492 to 643 (VKKE…KAKE). Residue Asn-617 is glycosylated (N-linked (GlcNAc...) asparagine). Positions 684–701 (PGESSGQPSSPGQKQQGQ) are enriched in low complexity.

In terms of assembly, homooligomer of variable subunit number; disulfide-linked. Interacts with CASQ1 and RYR1 in skeletal muscle. Interacts with CASQ2. Post-translationally, phosphorylated by CaMK2. N-glycosylated. As to expression, detected in heart (at protein level). Skeletal and cardiac muscle.

It localises to the sarcoplasmic reticulum membrane. Functionally, contributes to the regulation of lumenal Ca2+ release via the sarcoplasmic reticulum calcium release channels RYR1 and RYR2, a key step in triggering skeletal and heart muscle contraction. Required for normal organization of the triad junction, where T-tubules and the sarcoplasmic reticulum terminal cisternae are in close contact. Required for normal skeletal muscle strength. Plays a role in excitation-contraction coupling in the heart and in regulating the rate of heart beats. This is Triadin (TRDN) from Canis lupus familiaris (Dog).